Reading from the N-terminus, the 298-residue chain is Lipoyl synthase (298 aa).

[4Fe-4S] cluster is bound by residues C40, C45, C51, C67, C71, C74, and S280. Residues 53-269 (AVRKTATFMI…KEIALSKGFS (217 aa)) enclose the Radical SAM core domain.

Belongs to the radical SAM superfamily. Lipoyl synthase family. The cofactor is [4Fe-4S] cluster.

It is found in the cytoplasm. It catalyses the reaction [[Fe-S] cluster scaffold protein carrying a second [4Fe-4S](2+) cluster] + N(6)-octanoyl-L-lysyl-[protein] + 2 oxidized [2Fe-2S]-[ferredoxin] + 2 S-adenosyl-L-methionine + 4 H(+) = [[Fe-S] cluster scaffold protein] + N(6)-[(R)-dihydrolipoyl]-L-lysyl-[protein] + 4 Fe(3+) + 2 hydrogen sulfide + 2 5'-deoxyadenosine + 2 L-methionine + 2 reduced [2Fe-2S]-[ferredoxin]. It participates in protein modification; protein lipoylation via endogenous pathway; protein N(6)-(lipoyl)lysine from octanoyl-[acyl-carrier-protein]. Its function is as follows. Catalyzes the radical-mediated insertion of two sulfur atoms into the C-6 and C-8 positions of the octanoyl moiety bound to the lipoyl domains of lipoate-dependent enzymes, thereby converting the octanoylated domains into lipoylated derivatives. The sequence is that of Lipoyl synthase from Bacillus cereus (strain ATCC 10987 / NRS 248).